A 275-amino-acid chain; its full sequence is Light-independent protochlorophyllide reductase iron-sulfur ATP-binding protein (275 aa).

ATP is bound by residues 12-17 (GIGKST) and lysine 41. Serine 16 contributes to the Mg(2+) binding site. [4Fe-4S] cluster-binding residues include cysteine 97 and cysteine 131. An ATP-binding site is contributed by 182–183 (NR).

This sequence belongs to the NifH/BchL/ChlL family. Homodimer. Protochlorophyllide reductase is composed of three subunits; BchL, BchN and BchB. [4Fe-4S] cluster serves as cofactor.

It catalyses the reaction chlorophyllide a + oxidized 2[4Fe-4S]-[ferredoxin] + 2 ADP + 2 phosphate = protochlorophyllide a + reduced 2[4Fe-4S]-[ferredoxin] + 2 ATP + 2 H2O. Its pathway is porphyrin-containing compound metabolism; bacteriochlorophyll biosynthesis (light-independent). Its function is as follows. Component of the dark-operative protochlorophyllide reductase (DPOR) that uses Mg-ATP and reduced ferredoxin to reduce ring D of protochlorophyllide (Pchlide) to form chlorophyllide a (Chlide). This reaction is light-independent. The L component serves as a unique electron donor to the NB-component of the complex, and binds Mg-ATP. This is Light-independent protochlorophyllide reductase iron-sulfur ATP-binding protein from Pelodictyon phaeoclathratiforme (strain DSM 5477 / BU-1).